The sequence spans 65 residues: Protein translocase subunit SecE (65 aa).

The Cytoplasmic portion of the chain corresponds to M1 to L34. A helical membrane pass occupies residues V35 to F51. Topologically, residues S52–G65 are extracellular.

Belongs to the SecE/SEC61-gamma family. Component of the Sec protein translocase complex. Heterotrimer consisting of SecY, SecE and SecG subunits. The heterotrimers can form oligomers, although 1 heterotrimer is thought to be able to translocate proteins. Interacts with SecDF, and other proteins may be involved. The channel interacts with SecA via subunit SecY.

It localises to the cell inner membrane. In terms of biological role, essential subunit of the protein translocation channel SecYEG. Clamps together the 2 halves of SecY. May contact the channel plug during translocation. The protein is Protein translocase subunit SecE of Thermotoga maritima (strain ATCC 43589 / DSM 3109 / JCM 10099 / NBRC 100826 / MSB8).